The primary structure comprises 113 residues: Endoribonuclease SymE (113 aa).

Residues 29-74 form the SpoVT-AbrB domain; the sequence is SRYPDYSRIPAITLKGQWLEAAGFATGTAVDVKVMEGCIVLTAQPP.

Belongs to the SymE family.

The protein localises to the cytoplasm. Functionally, involved in the degradation and recycling of damaged RNA. It is itself a target for degradation by the ATP-dependent protease Lon. In Escherichia coli O6:K15:H31 (strain 536 / UPEC), this protein is Endoribonuclease SymE.